The chain runs to 171 residues: PRA1-like protein (171 aa).

The next 3 helical transmembrane spans lie at 67-87 (AIIA…LIVI), 119-139 (VILA…ETII), and 140-160 (WLVG…EPPV).

This sequence belongs to the PRA1 family.

The protein resides in the membrane. This chain is PRA1-like protein, found in Schizosaccharomyces pombe (strain 972 / ATCC 24843) (Fission yeast).